Consider the following 364-residue polypeptide: CCA-adding enzyme (364 aa).

ATP-binding residues include Gly19 and Arg22. The CTP site is built by Gly19 and Arg22. Mg(2+) contacts are provided by Asp32 and Asp34. Residues Arg102, Arg148, and Arg151 each contribute to the ATP site. CTP-binding residues include Arg102, Arg148, and Arg151.

The protein belongs to the tRNA nucleotidyltransferase/poly(A) polymerase family. Bacterial CCA-adding enzyme type 2 subfamily. Mg(2+) is required as a cofactor.

The enzyme catalyses a tRNA precursor + 2 CTP + ATP = a tRNA with a 3' CCA end + 3 diphosphate. The catalysed reaction is a tRNA with a 3' CCA end + 2 CTP + ATP = a tRNA with a 3' CCACCA end + 3 diphosphate. Its function is as follows. Catalyzes the addition and repair of the essential 3'-terminal CCA sequence in tRNAs without using a nucleic acid template. Adds these three nucleotides in the order of C, C, and A to the tRNA nucleotide-73, using CTP and ATP as substrates and producing inorganic pyrophosphate. tRNA 3'-terminal CCA addition is required both for tRNA processing and repair. Also involved in tRNA surveillance by mediating tandem CCA addition to generate a CCACCA at the 3' terminus of unstable tRNAs. While stable tRNAs receive only 3'-terminal CCA, unstable tRNAs are marked with CCACCA and rapidly degraded. The sequence is that of CCA-adding enzyme from Bordetella bronchiseptica (strain ATCC BAA-588 / NCTC 13252 / RB50) (Alcaligenes bronchisepticus).